A 249-amino-acid chain; its full sequence is Anti-H(O) lectin 2 (249 aa).

An N-linked (GlcNAc...) asparagine glycan is attached at N118. Mn(2+)-binding residues include E130 and D132. 4 residues coordinate Ca(2+): D132, Y134, N140, and D145. Positions 145 and 148 each coordinate Mn(2+). N245 carries an N-linked (GlcNAc...) asparagine glycan.

Belongs to the leguminous lectin family.

Di-N-acetylchitobiose specific lectin. This chain is Anti-H(O) lectin 2, found in Ulex europaeus (Furze).